The primary structure comprises 670 residues: Solute carrier organic anion transporter family member 1A1 (670 aa).

Residues 1–20 are Cytoplasmic-facing; sequence MEETEKKIATQEGRLFSKMK. A helical transmembrane segment spans residues 21 to 40; it reads VFLLSLTCACLTKSLSGVYM. Residues 41–59 are Extracellular-facing; the sequence is NSMLTQIERQFDISTSVAG. The helical transmembrane segment at 60–80 threads the bilayer; the sequence is LINGSFEIGNLFFIVFVSYFG. Topologically, residues 81–86 are cytoplasmic; that stretch reads TKLHRP. The helical transmembrane segment at 87-111 threads the bilayer; it reads VVIGIGCVIMGLGCLLMSLPHFFMG. Topologically, residues 112 to 155 are extracellular; that stretch reads RYEYETTISPTGNLSSNSFLCMENRTQTLKPTQDPAECVKEMKS. 2 N-linked (GlcNAc...) asparagine glycosylation sites follow: Asn-124 and Asn-135. The helical transmembrane segment at 156 to 184 threads the bilayer; it reads LMWICVMVGNIIRGIGETPIVPLGISYIE. Residues 185–203 lie on the Cytoplasmic side of the membrane; that stretch reads DFAKSENSPLYIGILEMGK. A helical membrane pass occupies residues 204–224; that stretch reads VAGPIFGLLLGSYCAQIYVDI. Residues 225–242 are Extracellular-facing; that stretch reads GSVNTDDLTITPSDTRWV. Residues 243–267 traverse the membrane as a helical segment; sequence GAWWIGFLVCAGVNILTSIPFFFLP. The Cytoplasmic segment spans residues 268–311; sequence KALPKKGQQENVAVTKDGKVEKYGGQAREENLGITKDFLTFMKR. The helical transmembrane segment at 312-333 threads the bilayer; sequence LFCNPIYMLFILTSVLQVNGFI. The Extracellular portion of the chain corresponds to 334-353; that stretch reads NKFTFLPKYLEQQYGKSTAE. The helical transmembrane segment at 354–377 threads the bilayer; sequence AIFLIGVYSLPPICLGYLIGGFIM. Over 378 to 381 the chain is Cytoplasmic; sequence KKFK. A helical transmembrane segment spans residues 382 to 405; that stretch reads ITVKKAAYLAFCLSVFEYLLFLCH. Residues 406–513 lie on the Extracellular side of the membrane; that stretch reads FMLTCDNAAV…PECANRLQYF (108 aa). The Kazal-like domain occupies 433–488; that stretch reads SKVLADCNTRCSCSTNTWDPVCGDNGVAYMSACLAGCKKFVGTGTNMVFQDCSCIQ. 3 disulfide bridges follow: Cys-439-Cys-469, Cys-445-Cys-465, and Cys-454-Cys-486. Asn-492 carries N-linked (GlcNAc...) asparagine glycosylation. The helical transmembrane segment at 514–536 threads the bilayer; it reads LILTIIISFIYSLTAIPGYMVFL. Residues 537 to 545 are Cytoplasmic-facing; that stretch reads RCVKSEEKS. The helical transmembrane segment at 546-571 threads the bilayer; that stretch reads LGVGLHTFCIRVFAGIPAPVYFGALI. Residues 572-605 lie on the Extracellular side of the membrane; it reads DRTCLHWGTLKCGQRGACRMYDINSFRHIYLGLP. Residues 606–623 traverse the membrane as a helical segment; sequence IALRGSSYLPAFFILILM. The Cytoplasmic segment spans residues 624-670; sequence RKFQFPGDIDSSATDHTEMMLGEKESEHTDVHGSPQVENDGELKTKL. Phosphoserine occurs at positions 634 and 635. Residues 645–654 show a composition bias toward basic and acidic residues; that stretch reads GEKESEHTDV. The disordered stretch occupies residues 645–670; the sequence is GEKESEHTDVHGSPQVENDGELKTKL.

It belongs to the organo anion transporter (TC 2.A.60) family. In terms of assembly, binds to PDZK1. Interaction with PDZK1 is required for expression on hepatocyte surface. Glycosylated. As to expression, highly expressed in liver and kidney, and at lower levels in brain, lung, skeletal muscle and proximal colon.

It is found in the basolateral cell membrane. The catalysed reaction is estrone 3-sulfate(out) + hydrogencarbonate(in) = estrone 3-sulfate(in) + hydrogencarbonate(out). It carries out the reaction taurocholate(out) + hydrogencarbonate(in) = taurocholate(in) + hydrogencarbonate(out). It catalyses the reaction L-thyroxine(out) = L-thyroxine(in). The enzyme catalyses prostaglandin E2(out) = prostaglandin E2(in). The catalysed reaction is 17beta-estradiol 17-O-(beta-D-glucuronate)(out) = 17beta-estradiol 17-O-(beta-D-glucuronate)(in). It carries out the reaction dehydroepiandrosterone 3-sulfate(out) = dehydroepiandrosterone 3-sulfate(in). In terms of biological role, mediates the Na(+)-independent transport of organic anions such as steroid sulfate conjugates (dehydroepiandrosterone sulfate (DHEAS), 17-beta-glucuronosyl estradiol, estrone-3-sulfate), conjugated (taurocholate) and unconjugated (cholate) bile acids, prostaglandin E2 (PGE2) and L-thyroxine T4. Also capable of transporting sulfobromophthalein (BSP), ouabain and gadoxetate. Hydrogencarbonate/HCO3(-) acts as the probable counteranion that exchanges for organic anions. Shows a pH-sensitive substrate specificity which may be ascribed to the protonation state of the binding site and leads to a stimulation of substrate transport in an acidic microenvironment. This is Solute carrier organic anion transporter family member 1A1 from Rattus norvegicus (Rat).